A 502-amino-acid polypeptide reads, in one-letter code: ATP synthase subunit alpha (502 aa).

An ATP-binding site is contributed by 169–176; it reads GDRQTGKT.

This sequence belongs to the ATPase alpha/beta chains family. F-type ATPases have 2 components, CF(1) - the catalytic core - and CF(0) - the membrane proton channel. CF(1) has five subunits: alpha(3), beta(3), gamma(1), delta(1), epsilon(1). CF(0) has three main subunits: a(1), b(2) and c(9-12). The alpha and beta chains form an alternating ring which encloses part of the gamma chain. CF(1) is attached to CF(0) by a central stalk formed by the gamma and epsilon chains, while a peripheral stalk is formed by the delta and b chains.

Its subcellular location is the cell membrane. The enzyme catalyses ATP + H2O + 4 H(+)(in) = ADP + phosphate + 5 H(+)(out). Produces ATP from ADP in the presence of a proton gradient across the membrane. The alpha chain is a regulatory subunit. This chain is ATP synthase subunit alpha, found in Exiguobacterium sibiricum (strain DSM 17290 / CCUG 55495 / CIP 109462 / JCM 13490 / 255-15).